A 285-amino-acid polypeptide reads, in one-letter code: 4-diphosphocytidyl-2-C-methyl-D-erythritol kinase (285 aa).

Lysine 28 is an active-site residue. 109 to 119 (PVAAGLGGGSA) contacts ATP. The active site involves aspartate 148.

Belongs to the GHMP kinase family. IspE subfamily.

The catalysed reaction is 4-CDP-2-C-methyl-D-erythritol + ATP = 4-CDP-2-C-methyl-D-erythritol 2-phosphate + ADP + H(+). It participates in isoprenoid biosynthesis; isopentenyl diphosphate biosynthesis via DXP pathway; isopentenyl diphosphate from 1-deoxy-D-xylulose 5-phosphate: step 3/6. Catalyzes the phosphorylation of the position 2 hydroxy group of 4-diphosphocytidyl-2C-methyl-D-erythritol. The sequence is that of 4-diphosphocytidyl-2-C-methyl-D-erythritol kinase from Novosphingobium aromaticivorans (strain ATCC 700278 / DSM 12444 / CCUG 56034 / CIP 105152 / NBRC 16084 / F199).